We begin with the raw amino-acid sequence, 391 residues long: DNA primase small subunit PriS (391 aa).

Catalysis depends on residues Asp98, Asp100, and Asp294.

This sequence belongs to the eukaryotic-type primase small subunit family. Heterodimer of a small subunit (PriS) and a large subunit (PriL). Mg(2+) is required as a cofactor. It depends on Mn(2+) as a cofactor.

Functionally, catalytic subunit of DNA primase, an RNA polymerase that catalyzes the synthesis of short RNA molecules used as primers for DNA polymerase during DNA replication. The small subunit contains the primase catalytic core and has DNA synthesis activity on its own. Binding to the large subunit stabilizes and modulates the activity, increasing the rate of DNA synthesis while decreasing the length of the DNA fragments, and conferring RNA synthesis capability. The DNA polymerase activity may enable DNA primase to also catalyze primer extension after primer synthesis. May also play a role in DNA repair. This is DNA primase small subunit PriS from Halobacterium salinarum (strain ATCC 29341 / DSM 671 / R1).